The sequence spans 351 residues: Methylthioribose-1-phosphate isomerase (351 aa).

Substrate-binding positions include 55–57 (RGA), Arg95, and Gln202. Asp243 serves as the catalytic Proton donor. Position 253-254 (253-254 (NK)) interacts with substrate.

It belongs to the eIF-2B alpha/beta/delta subunits family. MtnA subfamily.

It carries out the reaction 5-(methylsulfanyl)-alpha-D-ribose 1-phosphate = 5-(methylsulfanyl)-D-ribulose 1-phosphate. It functions in the pathway amino-acid biosynthesis; L-methionine biosynthesis via salvage pathway; L-methionine from S-methyl-5-thio-alpha-D-ribose 1-phosphate: step 1/6. Its function is as follows. Catalyzes the interconversion of methylthioribose-1-phosphate (MTR-1-P) into methylthioribulose-1-phosphate (MTRu-1-P). The chain is Methylthioribose-1-phosphate isomerase from Marinobacter nauticus (strain ATCC 700491 / DSM 11845 / VT8) (Marinobacter aquaeolei).